A 231-amino-acid chain; its full sequence is Endo-1,4-beta-xylanase A (231 aa).

The signal sequence occupies residues 1-19; sequence MVSFKSLLVAVSALTGALA. Asn-32 carries an N-linked (GlcNAc...) asparagine glycan. Residues 41–229 enclose the GH11 domain; the sequence is QVTGNSEGYH…SSGSSSIYVQ (189 aa). The Nucleophile role is filled by Glu-125. The active-site Proton donor is Glu-216.

Belongs to the glycosyl hydrolase 11 (cellulase G) family.

It localises to the secreted. The catalysed reaction is Endohydrolysis of (1-&gt;4)-beta-D-xylosidic linkages in xylans.. The protein operates within glycan degradation; xylan degradation. Its activity is regulated as follows. Inhibited by the proteinaceous endoxylanase inhibitor I from T.aestivum (TAXI-I). Functionally, endo-1,4-beta-xylanase involved in the hydrolysis of xylan, a major structural heterogeneous polysaccharide found in plant biomass representing the second most abundant polysaccharide in the biosphere, after cellulose. Plays an important role in causing fusarium head blight (FHB) on cereal crops. This chain is Endo-1,4-beta-xylanase A (XYLA), found in Gibberella zeae (strain ATCC MYA-4620 / CBS 123657 / FGSC 9075 / NRRL 31084 / PH-1) (Wheat head blight fungus).